The sequence spans 870 residues: Linoleate 9S-lipoxygenase 2 (870 aa).

The 127-residue stretch at 32 to 158 (NDFGATVIDG…KYRYNRVFFS (127 aa)) folds into the PLAT domain. The region spanning 161–870 (TSLPSKMPAA…ARGIPNSISI (710 aa)) is the Lipoxygenase domain. Residues 203-243 (YNDLGEPDSGNPRPVLGGSPDRPYPRRGRTGRKPTKTDPTA) form a disordered region. Positions 227-236 (PRRGRTGRKP) are enriched in basic residues. Fe cation contacts are provided by His525, His530, His716, Asn720, and Ile870.

It belongs to the lipoxygenase family. In terms of assembly, monomer. The cofactor is Fe cation.

The protein resides in the cytoplasm. It catalyses the reaction (9Z,12Z)-octadecadienoate + O2 = (9S)-hydroperoxy-(10E,12Z)-octadecadienoate. It participates in lipid metabolism; oxylipin biosynthesis. Plant lipoxygenase may be involved in a number of diverse aspects of plant physiology including growth and development, pest resistance, and senescence or responses to wounding. Catalyzes the hydroperoxidation of lipids containing a cis,cis-1,4-pentadiene structure. This is Linoleate 9S-lipoxygenase 2 (LOX1.1) from Oryza sativa subsp. japonica (Rice).